A 333-amino-acid chain; its full sequence is Arginase (333 aa).

Met-1 bears the N-acetylmethionine mark. Phosphoserine is present on Ser-16. Thr-77 carries the post-translational modification Phosphothreonine. Mn(2+) is bound by residues His-123, Asp-146, His-148, and Asp-150. Substrate is bound by residues 148 to 152 (HADIN), 159 to 161 (SGN), and Asp-205. Residues Asp-256 and Asp-258 each contribute to the Mn(2+) site. Thr-270 bears the Phosphothreonine mark. Thr-270 and Glu-301 together coordinate substrate.

It belongs to the arginase family. Homotrimer. Mn(2+) is required as a cofactor.

The enzyme catalyses L-arginine + H2O = urea + L-ornithine. It functions in the pathway nitrogen metabolism; urea cycle; L-ornithine and urea from L-arginine: step 1/1. The protein is Arginase (CAR1) of Saccharomyces cerevisiae (strain ATCC 204508 / S288c) (Baker's yeast).